The chain runs to 534 residues: MSEVVAETARRRTFAIISHPDAGKTTLTEKLLLFGGAIQMAGSVKSRKAVRHATSDWMTLEKERGISVTSSVMQFPYEGKIINLLDTPGHADFGEDTYRVLTAVDSALMVIDVAKGVEERTIKLMEVCRLRDTPIMTFINKLDREGKNPIELLDEVERVLGIQCAPVTWPIGMGKRLRGVVNLLTNEVHLYEPGRNFTRQDSTIFTSLEAPGLAERIGEQMLADLHEELELIQGASACFDPTEYLGGRQTPVFFGSGVNNFGVQPLLDFFVEHAPSPQQRDTTSRVVLPTEEKLTGFVFKIQANMDPQHRDRVAFMRVCSGRFTAGMKAFHVRSSKDLKLANALTFMASDRESVAEAFPGDVIGIHNHGRVSIGDTFTEGEVLSFTGIPSFAPELFRRACLGDPLKLKQLQKGLTQLSEEGATQFFRPLMSNDLILGAVGMLQFDVVAYRLKNEYGVDATFEPVSITTARWVYCDNSKTLEEFREKNVTNLAVDASGELVYLAPTRVNLQLAQERAPEIHFFATREHAYAVGVD.

The 270-residue stretch at 9–278 folds into the tr-type G domain; the sequence is ARRRTFAIIS…FFVEHAPSPQ (270 aa). GTP contacts are provided by residues 18 to 25, 86 to 90, and 140 to 143; these read SHPDAGKT, DTPGH, and NKLD.

This sequence belongs to the TRAFAC class translation factor GTPase superfamily. Classic translation factor GTPase family. PrfC subfamily.

The protein resides in the cytoplasm. Functionally, increases the formation of ribosomal termination complexes and stimulates activities of RF-1 and RF-2. It binds guanine nucleotides and has strong preference for UGA stop codons. It may interact directly with the ribosome. The stimulation of RF-1 and RF-2 is significantly reduced by GTP and GDP, but not by GMP. This chain is Peptide chain release factor 3, found in Xylella fastidiosa (strain M12).